The chain runs to 84 residues: Cell division topological specificity factor (84 aa).

It belongs to the MinE family.

In terms of biological role, prevents the cell division inhibition by proteins MinC and MinD at internal division sites while permitting inhibition at polar sites. This ensures cell division at the proper site by restricting the formation of a division septum at the midpoint of the long axis of the cell. This is Cell division topological specificity factor from Burkholderia multivorans (strain ATCC 17616 / 249).